A 71-amino-acid chain; its full sequence is Vitellogenin-B2 (71 aa).

The first 15 residues, 1 to 15 (MRGIILALLLALAGC), serve as a signal peptide directing secretion. One can recognise a Vitellogenin domain in the interval 24–71 (FSESKTYVYNYEGIILNGIPENGLARSGIKLNCKVELSGYAQRSYMLK).

As to expression, produced by the liver, secreted into the blood and then sequestered by receptor mediated endocytosis into growing oocytes, where it is generally cleaved, giving rise to the respective yolk components.

Functionally, precursor of the major egg-yolk proteins that are sources of nutrients during early development of oviparous organisms. The sequence is that of Vitellogenin-B2 from Xenopus laevis (African clawed frog).